A 161-amino-acid chain; its full sequence is Small ribosomal subunit protein bS6 (161 aa).

The tract at residues 107-161 (KGDERERGFRGPKPAGRFESGRGGAGGARRGYDDREEFRARNEREDGRDTDGEAE) is disordered. Basic and acidic residues predominate over residues 136-161 (RGYDDREEFRARNEREDGRDTDGEAE).

Belongs to the bacterial ribosomal protein bS6 family.

Functionally, binds together with bS18 to 16S ribosomal RNA. The sequence is that of Small ribosomal subunit protein bS6 from Gluconacetobacter diazotrophicus (strain ATCC 49037 / DSM 5601 / CCUG 37298 / CIP 103539 / LMG 7603 / PAl5).